We begin with the raw amino-acid sequence, 164 residues long: MTKIPDNIRQDAFKYVMENKPNELFELIAMNPGLINERSQGNQDTLFMRACRYLHKDIIEILLNEQANPTDINNHGNNAIMCLFYREDQHKKPKDINEHDEKAVAILKLFEEKNIPINCFTGQDADKDTPLIEAARAALPQSISFMLDYLEKKSLLRRSIITYK.

ANK repeat units lie at residues N42 to L107 and D126 to Y149.

This is Putative ankyrin repeat protein RBE_0585 from Rickettsia bellii (strain RML369-C).